The following is a 76-amino-acid chain: Conotoxin Cal5a L3 (76 aa).

An N-terminal signal peptide occupies residues 1–22 (MRFYIGLMAALMLTSVLRTDSA). Residues 23–42 (SVGQTGTKSELAVIERVIRQ) constitute a propeptide that is removed on maturation. Proline 50 is subject to 4-hydroxyproline. 4-hydroxyproline; partial occurs at positions 58, 62, and 64.

The protein belongs to the conotoxin T superfamily. Contains 2 disulfide bonds that can be either 'C1-C3, C2-C4' or 'C1-C4, C2-C3', since these disulfide connectivities have been observed for conotoxins with cysteine framework V (for examples, see AC P0DQQ7 and AC P81755). As to expression, expressed by the venom duct.

The protein resides in the secreted. Its function is as follows. Probable neurotoxin with unknown target. Possibly targets ion channels. In Californiconus californicus (California cone), this protein is Conotoxin Cal5a L3.